The following is a 287-amino-acid chain: ATP synthase gamma chain (287 aa).

It belongs to the ATPase gamma chain family. F-type ATPases have 2 components, CF(1) - the catalytic core - and CF(0) - the membrane proton channel. CF(1) has five subunits: alpha(3), beta(3), gamma(1), delta(1), epsilon(1). CF(0) has three main subunits: a, b and c.

The protein resides in the cell inner membrane. Its function is as follows. Produces ATP from ADP in the presence of a proton gradient across the membrane. The gamma chain is believed to be important in regulating ATPase activity and the flow of protons through the CF(0) complex. This is ATP synthase gamma chain from Salmonella agona (strain SL483).